A 542-amino-acid polypeptide reads, in one-letter code: DNA-binding protein modulo (542 aa).

Positions 1–166 are disordered; that stretch reads MAQKKAVTVK…RGIPKVKVGK (166 aa). A phosphoserine mark is found at serine 42 and serine 44. Acidic residues predominate over residues 59–114; the sequence is SEEDESDVEEQNDEQPGDDSDFETEEAAGLIDDEAEEDEEYNSDDEEDDDDDELEP. Phosphoserine occurs at positions 120, 129, and 142. Residues 123-135 show a composition bias toward acidic residues; the sequence is ADEVDESDDDEEA. A compositionally biased stretch (basic and acidic residues) spans 136–158; that stretch reads PVEKPVSKKSEKANSEKSEENRG. RRM domains lie at 175–251, 258–331, 340–429, and 420–489; these read QIVF…QPRN, RTVV…RISQ, LTLV…NLTS, and RAIL…PNSL. Phosphoserine is present on serine 304. Serine 330 bears the Phosphoserine; by PKA mark. Serine 443 bears the Phosphoserine mark. The tract at residues 505 to 542 is disordered; it reads RAPRKFQKDTKPNFGKKPFNKRPAQENGGKSFVKRARF.

In terms of processing, the N-terminus is blocked.

The protein localises to the nucleus. Functionally, its capacity to bind DNA and protein(s), and its differential expression during development suggest a role in the regulation of gene expression during Drosophila development. It could, in interaction with other factors, be required for the translation of instructions provided by pattern forming genes and controls, via chromatin changes, the activity of genes critical for the process of morphogenesis of several embryonic territories. The sequence is that of DNA-binding protein modulo (mod) from Drosophila melanogaster (Fruit fly).